A 390-amino-acid chain; its full sequence is MKKIALTALAVFSLAASAAYADVVKVGVIGPFSGPFALQGKNFKAGIDAYMAEHGNKVGDDTVEVVYRDVPQADPAQSKALAQELVVKEGVQYLAGFYFTPDAMAVTPILKQGNVPMVVMNAATSSIVTKSPYVVRTSFTTWQTSTPIARVALDKGVKKVISVVSDYGPGVDAENAFKAAFTDAGGEVVEAIRMPLATNDFSPIMQRIKDSGAQGVFAFLPSDPTTLGFMKAYVDNGLKSSGIQLFAPGDLTQESDLPALGENALGVLTTFHYAVSHDSPENRKFVEEARKAIGNPAELSFPSVGAYDGMHVIYKMIEATGGKKDAAKAVEAVKGMEWVSPRGPVSIDPESRHITQNIYLREVAKADDGTYYNKEIQTFEKQGDPGLKAQ.

The N-terminal stretch at 1 to 21 is a signal peptide; that stretch reads MKKIALTALAVFSLAASAAYA.

The protein belongs to the leucine-binding protein family.

Its function is as follows. Component of an amino-acid transport system. This is Leu/Ile/Val-binding protein homolog 6 from Brucella suis biovar 1 (strain 1330).